A 130-amino-acid polypeptide reads, in one-letter code: Methylglyoxal synthase (130 aa).

The MGS-like domain occupies Met-1–Cys-130. Substrate-binding positions include His-11, Lys-15, Thr-37–Thr-40, and Ser-57–Gly-58. Asp-63 (proton donor/acceptor) is an active-site residue. His-90 contacts substrate.

It belongs to the methylglyoxal synthase family.

The catalysed reaction is dihydroxyacetone phosphate = methylglyoxal + phosphate. Its function is as follows. Catalyzes the formation of methylglyoxal from dihydroxyacetone phosphate. The sequence is that of Methylglyoxal synthase from Burkholderia multivorans (strain ATCC 17616 / 249).